The chain runs to 113 residues: MAQHRKLGLPSDHRRAMLRNLVTSFLKHGKIQTTVTRAKEARSLAEKMITLAKRGDLHARRQVLSFVTEEEVVKNLFTNIAPKYAERNGGYTRMYKIGPRRGDGAELVILELV.

Belongs to the bacterial ribosomal protein bL17 family. Part of the 50S ribosomal subunit. Contacts protein L32.

The sequence is that of Large ribosomal subunit protein bL17 from Clostridium kluyveri (strain NBRC 12016).